The primary structure comprises 367 residues: 3-dehydroquinate synthase (367 aa).

Residues 69-74 (DGEAFK), 103-107 (GVVGD), 127-128 (TT), lysine 140, lysine 149, and 167-170 (TLAT) contribute to the NAD(+) site. Residues glutamate 182, histidine 245, and histidine 262 each contribute to the Zn(2+) site.

It belongs to the sugar phosphate cyclases superfamily. Dehydroquinate synthase family. It depends on Co(2+) as a cofactor. The cofactor is Zn(2+). NAD(+) is required as a cofactor.

It is found in the cytoplasm. It catalyses the reaction 7-phospho-2-dehydro-3-deoxy-D-arabino-heptonate = 3-dehydroquinate + phosphate. Its pathway is metabolic intermediate biosynthesis; chorismate biosynthesis; chorismate from D-erythrose 4-phosphate and phosphoenolpyruvate: step 2/7. Its function is as follows. Catalyzes the conversion of 3-deoxy-D-arabino-heptulosonate 7-phosphate (DAHP) to dehydroquinate (DHQ). The protein is 3-dehydroquinate synthase of Azotobacter vinelandii (strain DJ / ATCC BAA-1303).